Here is a 101-residue protein sequence, read N- to C-terminus: MIPLGYFLIIGAILFGLGFAGIIINRKNLIVLLMCIELMLLAVNTNFIAFSQYLGARAGEIFVFFILTVAAAESAIGLAILVLFYRRRGSINVDDMNILKG.

The next 3 helical transmembrane spans lie at 4–24, 30–50, and 61–81; these read LGYF…GIII, IVLL…FIAF, and IFVF…LAIL.

This sequence belongs to the complex I subunit 4L family. NDH-1 is composed of 14 different subunits. Subunits NuoA, H, J, K, L, M, N constitute the membrane sector of the complex.

The protein localises to the cell inner membrane. It carries out the reaction a quinone + NADH + 5 H(+)(in) = a quinol + NAD(+) + 4 H(+)(out). In terms of biological role, NDH-1 shuttles electrons from NADH, via FMN and iron-sulfur (Fe-S) centers, to quinones in the respiratory chain. The immediate electron acceptor for the enzyme in this species is believed to be ubiquinone. Couples the redox reaction to proton translocation (for every two electrons transferred, four hydrogen ions are translocated across the cytoplasmic membrane), and thus conserves the redox energy in a proton gradient. The protein is NADH-quinone oxidoreductase subunit K of Coxiella burnetii (strain CbuG_Q212) (Coxiella burnetii (strain Q212)).